The sequence spans 1610 residues: E3 ubiquitin-protein ligase listerin (1610 aa).

Positions 1–10 (MKKKSTDLYG) are enriched in basic and acidic residues. The interval 1–20 (MKKKSTDLYGRKNPGMQSMS) is disordered. 12 HEAT repeats span residues 110 to 148 (LKIF…SDRA), 314 to 351 (VPML…NLIT), 372 to 408 (IGAM…EVYD), 409 to 443 (CLLN…RYFK), 590 to 626 (SPAF…SFDE), 627 to 664 (LENI…TAVF), 736 to 773 (KSLY…KALE), 965 to 1003 (GKMP…VVSN), 1119 to 1156 (CCFL…MSVV), 1322 to 1354 (RVYL…HAMD), 1355 to 1393 (LLRP…YSSA), and 1435 to 1473 (FTGY…KVNR). The segment at 1558-1604 (CAICYSVLSVERTLPNKRCGTCRHKFHASCLYKWFKSSNSSRCPLCR) adopts an RING-type; atypical zinc-finger fold.

The protein belongs to the LTN1 family. Component of the ribosome quality control complex (RQC), composed of the E3 ubiquitin ligase rkr1/ltn1, rqc1 and mtr1/rqc2, as well as cdc48 and its ubiquitin-binding cofactors. RQC forms a stable complex with 60S ribosomal subunits.

Its subcellular location is the nucleus. It is found in the cytoplasm. The protein localises to the cytosol. It catalyses the reaction S-ubiquitinyl-[E2 ubiquitin-conjugating enzyme]-L-cysteine + [acceptor protein]-L-lysine = [E2 ubiquitin-conjugating enzyme]-L-cysteine + N(6)-ubiquitinyl-[acceptor protein]-L-lysine.. It participates in protein modification; protein ubiquitination. Its function is as follows. E3 ubiquitin-protein ligase component of the ribosome quality control complex (RQC), a ribosome-associated complex that mediates ubiquitination and extraction of incompletely synthesized nascent chains for proteasomal degradation. Mediates ubiquitination of proteins derived from mRNAs lacking stop codons (non-stop proteins) and other translation arrest products induced by poly-lysine sequences and tandem rare codons. Ubiquitination leads to cdc48 recruitment for extraction and degradation of the incomplete translation product. May indirectly play a role in chromatin function and transcription. The protein is E3 ubiquitin-protein ligase listerin of Schizosaccharomyces pombe (strain 972 / ATCC 24843) (Fission yeast).